A 288-amino-acid chain; its full sequence is Probable branched-chain-amino-acid aminotransferase (288 aa).

Lys-153 is subject to N6-(pyridoxal phosphate)lysine.

This sequence belongs to the class-IV pyridoxal-phosphate-dependent aminotransferase family. The cofactor is pyridoxal 5'-phosphate.

It catalyses the reaction L-leucine + 2-oxoglutarate = 4-methyl-2-oxopentanoate + L-glutamate. The enzyme catalyses L-isoleucine + 2-oxoglutarate = (S)-3-methyl-2-oxopentanoate + L-glutamate. It carries out the reaction L-valine + 2-oxoglutarate = 3-methyl-2-oxobutanoate + L-glutamate. Its pathway is amino-acid biosynthesis; L-isoleucine biosynthesis; L-isoleucine from 2-oxobutanoate: step 4/4. It participates in amino-acid biosynthesis; L-leucine biosynthesis; L-leucine from 3-methyl-2-oxobutanoate: step 4/4. The protein operates within amino-acid biosynthesis; L-valine biosynthesis; L-valine from pyruvate: step 4/4. In terms of biological role, acts on leucine, isoleucine and valine. The polypeptide is Probable branched-chain-amino-acid aminotransferase (ilvE) (Rickettsia typhi (strain ATCC VR-144 / Wilmington)).